A 169-amino-acid chain; its full sequence is Thiol peroxidase (169 aa).

Residues 19–167 (LKVGDRAPEA…YDEVVNKVKE (149 aa)) enclose the Thioredoxin domain. Catalysis depends on Cys61, which acts as the Cysteine sulfenic acid (-SOH) intermediate. A disulfide bridge links Cys61 with Cys95.

This sequence belongs to the peroxiredoxin family. Tpx subfamily. In terms of assembly, homodimer.

It catalyses the reaction a hydroperoxide + [thioredoxin]-dithiol = an alcohol + [thioredoxin]-disulfide + H2O. Its function is as follows. Thiol-specific peroxidase that catalyzes the reduction of hydrogen peroxide and organic hydroperoxides to water and alcohols, respectively. Plays a role in cell protection against oxidative stress by detoxifying peroxides. This is Thiol peroxidase from Aquifex aeolicus (strain VF5).